A 262-amino-acid chain; its full sequence is NAD-dependent protein deacylase (262 aa).

The Deacetylase sirtuin-type domain maps to 1–262 (MSNLRRAAEA…AALSPPGVPT (262 aa)). Residue 22–42 (GAGISADSGIPTFRDKLTGLW) participates in NAD(+) binding. Residues Tyr67 and Arg70 each coordinate substrate. 101–104 (QNID) is an NAD(+) binding site. His119 serves as the catalytic Proton acceptor. Residues Cys127, Cys130, Cys155, and Cys158 each coordinate Zn(2+). NAD(+) is bound by residues 195-197 (GTS), 221-223 (NLE), and Ala239.

This sequence belongs to the sirtuin family. Class III subfamily. Requires Zn(2+) as cofactor.

The protein localises to the cytoplasm. It carries out the reaction N(6)-acetyl-L-lysyl-[protein] + NAD(+) + H2O = 2''-O-acetyl-ADP-D-ribose + nicotinamide + L-lysyl-[protein]. The catalysed reaction is N(6)-succinyl-L-lysyl-[protein] + NAD(+) + H2O = 2''-O-succinyl-ADP-D-ribose + nicotinamide + L-lysyl-[protein]. Functionally, NAD-dependent lysine deacetylase and desuccinylase that specifically removes acetyl and succinyl groups on target proteins. Modulates the activities of several proteins which are inactive in their acylated form. This is NAD-dependent protein deacylase from Pseudomonas putida (strain ATCC 47054 / DSM 6125 / CFBP 8728 / NCIMB 11950 / KT2440).